The primary structure comprises 611 residues: MRHTALLPLVSSFIVPALAQIPGQTTVNATVNQGRFGNATYDYVIVGGGTSGLAIAARLAEDPSLSVAVIEAGGYYELDGTVASIIPGLAAGANVGTDATEYSTVDWNFQAQPLTSANDRSLRYNRGKTLGGSSARHYMVYQRGTRGSYDQWAELTGDESWGWDSVFPYFQRSVNVTPANMTGRFPNTTVTYDPSGFNKAGGPLHVTWPNYGSPWSTWIEQGLEAIGILPDTDFNTGTLNGSSWAPITINPLSQKRDSSETSFLQQSLKTTNLTVYLHTMALKIGFDGTTASSVDVRSPVGRFTLSARREIIVSAGALQSPQLLMVSGIGPRETLERHGIPVVKELAGVGQKMWEHPFFGITHQVNLVTATELAINQQALLQALNQYKSQQGPLTSAGFGVLGWEKLPNSTLSDSTNEALATFPSDWPTIEYLSIDGYLNGWHSAADQATGNGQQWGTIAVALVAPLSRGNVTISSSDMDDPPVFDLGFLTHPADREIAVAAMRRIRQAFAAISEITIGDEVVPGADVSTDEELLDFIRESIVPVYHVAGTCAMGREDDPEAVVDPQARVIGVNNLRVVDASIFPTLPPGHPQSTCYMVAEKIADLIKKGN.

The first 19 residues, 1-19, serve as a signal peptide directing secretion; it reads MRHTALLPLVSSFIVPALA. Asparagine 28 and asparagine 38 each carry an N-linked (GlcNAc...) asparagine glycan. FAD is bound by residues 50-51, 71-72, and 137-140; these read TS, EA, and HYMV. N-linked (GlcNAc...) asparagine glycosylation is found at asparagine 180, asparagine 187, asparagine 240, asparagine 272, asparagine 409, and asparagine 471. The active-site Proton acceptor is histidine 547. Residues alanine 581 and 592 to 593 each bind FAD; that span reads PQ.

It belongs to the GMC oxidoreductase family. FAD is required as a cofactor.

It functions in the pathway secondary metabolite biosynthesis. Dehydrogenase; part of the gene cluster that mediates the biosynthesis of aspernidine A, a prenylated isoindolinone. The starting point of the biosynthesis of aspernidin A is the production of orsellinaldehyde by the non-reducing polyketide synthase pkfA. Hydroxylation, methylation of one of the phenol groups, and prenylation, presumably catalyzed by the prenyltransferase pkfE, would be needed to yield aspernidine D. Subsequently, the cytochrome P450 monooxygenase pkfB is responsible for hydroxylation of aspernidine D to yield aspernidine E. The dehydrogenase pkfF may be responsible for further oxidation of aspernidine E to form a dialdehyde intermediate which is further transformed in a series of steps, some of which are enzyme-mediated, to generate aspernidine A. The possibility that additional enzymes outside of the cluster are involved in aspernidine A biosynthesis cannot be excluded. The chain is Dehydrogenase pkfF from Emericella nidulans (strain FGSC A4 / ATCC 38163 / CBS 112.46 / NRRL 194 / M139) (Aspergillus nidulans).